A 312-amino-acid chain; its full sequence is D-alanine--D-alanine ligase (312 aa).

The ATP-grasp domain occupies 108-308 (KLVWQQTGIP…YSELVVKVLS (201 aa)). 138–193 (VAKLGVPLFVKPASEGSSVAVEKVKSADALPAALEEAAKHDKIVIVEKSIEGGGEY) provides a ligand contact to ATP. Residues Asp-262, Glu-275, and Asn-277 each coordinate Mg(2+).

It belongs to the D-alanine--D-alanine ligase family. The cofactor is Mg(2+). Requires Mn(2+) as cofactor.

Its subcellular location is the cytoplasm. The catalysed reaction is 2 D-alanine + ATP = D-alanyl-D-alanine + ADP + phosphate + H(+). Its pathway is cell wall biogenesis; peptidoglycan biosynthesis. Functionally, cell wall formation. The sequence is that of D-alanine--D-alanine ligase from Burkholderia mallei (strain NCTC 10247).